The following is a 929-amino-acid chain: Protein translocase subunit SecA (929 aa).

Residues Q83, 101–105 (GEGKT), and D491 contribute to the ATP site.

This sequence belongs to the SecA family. In terms of assembly, monomer and homodimer. Part of the essential Sec protein translocation apparatus which comprises SecA, SecYEG and auxiliary proteins SecDF. Other proteins may also be involved.

The protein localises to the cell inner membrane. Its subcellular location is the cellular thylakoid membrane. The protein resides in the cytoplasm. The enzyme catalyses ATP + H2O + cellular proteinSide 1 = ADP + phosphate + cellular proteinSide 2.. Functionally, part of the Sec protein translocase complex. Interacts with the SecYEG preprotein conducting channel. Has a central role in coupling the hydrolysis of ATP to the transfer of proteins into and across the cell membrane, serving as an ATP-driven molecular motor driving the stepwise translocation of polypeptide chains across the membrane. Probably participates in protein translocation into and across both the cytoplasmic and thylakoid membranes in cyanobacterial cells. This Thermosynechococcus vestitus (strain NIES-2133 / IAM M-273 / BP-1) protein is Protein translocase subunit SecA.